A 391-amino-acid chain; its full sequence is Formate-dependent phosphoribosylglycinamide formyltransferase (391 aa).

N(1)-(5-phospho-beta-D-ribosyl)glycinamide contacts are provided by residues 20-21 (EL) and glutamate 80. Residues arginine 112, lysine 153, 158 to 163 (SSGKGQ), 193 to 196 (EGFI), and glutamate 201 contribute to the ATP site. The region spanning 117–306 (RLAAETLGLP…EFALHVRAIL (190 aa)) is the ATP-grasp domain. Mg(2+) contacts are provided by glutamate 265 and glutamate 277. Residues aspartate 284, lysine 354, and 361–362 (RR) contribute to the N(1)-(5-phospho-beta-D-ribosyl)glycinamide site.

Belongs to the PurK/PurT family. As to quaternary structure, homodimer.

It carries out the reaction N(1)-(5-phospho-beta-D-ribosyl)glycinamide + formate + ATP = N(2)-formyl-N(1)-(5-phospho-beta-D-ribosyl)glycinamide + ADP + phosphate + H(+). It functions in the pathway purine metabolism; IMP biosynthesis via de novo pathway; N(2)-formyl-N(1)-(5-phospho-D-ribosyl)glycinamide from N(1)-(5-phospho-D-ribosyl)glycinamide (formate route): step 1/1. In terms of biological role, involved in the de novo purine biosynthesis. Catalyzes the transfer of formate to 5-phospho-ribosyl-glycinamide (GAR), producing 5-phospho-ribosyl-N-formylglycinamide (FGAR). Formate is provided by PurU via hydrolysis of 10-formyl-tetrahydrofolate. The polypeptide is Formate-dependent phosphoribosylglycinamide formyltransferase (Shewanella sp. (strain MR-7)).